The chain runs to 241 residues: NADPH-dependent FMN reductase ArsH (241 aa).

Position 43–50 (43–50) interacts with FMN; sequence SLRTVSYS.

Belongs to the ArsH family. Homotetramer. FMN is required as a cofactor.

Functionally, has NADPH-dependent FMN reductase activity. No activity with NADH. May play a role in resistance to heavy metal toxicity. In Rhizobium meliloti (strain 1021) (Ensifer meliloti), this protein is NADPH-dependent FMN reductase ArsH.